Here is a 172-residue protein sequence, read N- to C-terminus: Secretory-abundant heat soluble protein 64681 (172 aa).

The first 19 residues, 1 to 19 (MSRTIVALILLGLAALAAA), serve as a signal peptide directing secretion. An SAHS-c1 region spans residues 30 to 59 (EWAGKAWLGKWVSTDRSENWDAFVEALGLP). The interval 74–102 (WKEGDHYHHQIIIADKSYKQDIQFKLGEE) is SAHS-c2. N-linked (GlcNAc...) asparagine glycans are attached at residues Asn108 and Asn133. Residues 115 to 164 (KYTEVGDNLQNEVKIPSKNKTISDSYVVKGDELEKTYKINDVVAKRWYKK) are SAHS-c3.

It belongs to the Secretory-abundant heat soluble protein (SAHS) family.

Its subcellular location is the secreted. Secreted heat soluble protein acting as a molecular shield in water-deficient condition. Tardigrade-specific intrinsically disordered proteins (TDPs) are essential for desiccation tolerance by forming non-crystalline amorphous solids upon desiccation, and this vitrified state mirrors their protective capabilities. This Hypsibius exemplaris (Freshwater tardigrade) protein is Secretory-abundant heat soluble protein 64681.